The chain runs to 807 residues: 1-phosphatidylinositol 4,5-bisphosphate phosphodiesterase delta-4 (807 aa).

Positions 16–124 (LLMQEGTMMR…WMRGLQLLVD (109 aa)) constitute a PH domain. The tract at residues 26–53 (KVRTKSWKKLRYFRLQNDGMTVWHGSQP) is substrate binding. 3 EF-hand domains span residues 134–169 (QMDQ…MNVE), 170–205 (MDEE…LTKR), and 203–237 (TKRT…EQKE). Ca(2+)-binding residues include aspartate 147, asparagine 149, aspartate 151, arginine 153, glutamate 158, aspartate 183, serine 187, aspartate 189, and glutamate 194. The short motif at 213 to 243 (EDFSSDKQKLTLLEFVDFLRKEQKEKDHAPD) is the GBA element. In terms of domain architecture, PI-PLC X-box spans 290–435 (QDMTQPLSHY…LRGKILVKGK (146 aa)). Histidine 305 is a catalytic residue. Ca(2+)-binding residues include asparagine 306, glutamate 335, and aspartate 337. Histidine 350 is a catalytic residue. Glutamate 384 is a Ca(2+) binding site. Lysine 433 and lysine 435 together coordinate substrate. Positions 442 to 490 (VDKEEEEEEEEEELEKDEGPDLDPASPELDTQPQPETQGQAAGNKKERK) are disordered. The segment covering 443-462 (DKEEEEEEEEEELEKDEGPD) has biased composition (acidic residues). Positions 470-482 (LDTQPQPETQGQA) are enriched in polar residues. One can recognise a PI-PLC Y-box domain in the interval 538–654 (LSALVVYLRT…GYVLKPEFLR (117 aa)). Serine 567 and arginine 594 together coordinate substrate. In terms of domain architecture, C2 spans 654–781 (RDTQSSFNPE…QGYRHVSLLS (128 aa)). Residues aspartate 697, asparagine 721, aspartate 750, and tyrosine 751 each coordinate Ca(2+). Residues 776 to 779 (HVSL) carry the PDZ-binding motif.

In terms of assembly, interacts with GRIP1. Interacts (via GBA motif) with guanine nucleotide-binding protein G(i) alpha subunit GNAI3 (inactive GDP-bound form)l low-affinity interaction. The cofactor is Ca(2+).

Its subcellular location is the membrane. It is found in the nucleus. It localises to the cytoplasm. The protein localises to the endoplasmic reticulum. It catalyses the reaction a 1,2-diacyl-sn-glycero-3-phospho-(1D-myo-inositol-4,5-bisphosphate) + H2O = 1D-myo-inositol 1,4,5-trisphosphate + a 1,2-diacyl-sn-glycerol + H(+). The enzyme catalyses a 1,2-diacyl-sn-glycero-3-phospho-(1D-myo-inositol) + H2O = 1D-myo-inositol 1-phosphate + a 1,2-diacyl-sn-glycerol + H(+). Hydrolyzes the phosphatidylinositol 4,5-bisphosphate (PIP2) to generate 2 second messenger molecules diacylglycerol (DAG) and inositol 1,4,5-trisphosphate (IP3). DAG mediates the activation of protein kinase C (PKC), while IP3 releases Ca(2+) from intracellular stores. Required for acrosome reaction in sperm during fertilization, probably by acting as an important enzyme for intracellular Ca(2+) mobilization in the zona pellucida-induced acrosome reaction. May play a role in cell growth. Modulates the liver regeneration in cooperation with nuclear PKC. Overexpression up-regulates the Erk signaling pathway and proliferation. The protein is 1-phosphatidylinositol 4,5-bisphosphate phosphodiesterase delta-4 of Mus musculus (Mouse).